We begin with the raw amino-acid sequence, 334 residues long: Thiamine-binding periplasmic protein (334 aa).

Positions 1-23 (MRLLSLLTFSLFAVIGLAPAAQA) are cleaved as a signal peptide. Thiamine-binding positions include 64–65 (DG), 166–167 (AT), tryptophan 202, and 220–223 (YTTS).

Belongs to the bacterial solute-binding protein 1 family. As to quaternary structure, the complex is composed of two ATP-binding proteins (ThiQ), two transmembrane proteins (ThiP) and a solute-binding protein (ThiB).

Its subcellular location is the periplasm. Functionally, part of the ABC transporter complex ThiBPQ involved in thiamine import. The polypeptide is Thiamine-binding periplasmic protein (thiB) (Brucella abortus biovar 1 (strain 9-941)).